A 363-amino-acid chain; its full sequence is Small ribosomal subunit biogenesis GTPase RsgA (363 aa).

Positions 112–268 constitute a CP-type G domain; that stretch reads HQQVIAANID…LIDTPGMREL (157 aa). Residues 157–160 and 210–218 contribute to the GTP site; these read TKAD and GSSGAGKST. Cys-291, Cys-296, His-298, and Cys-304 together coordinate Zn(2+). The segment at 340–363 is disordered; it reads RVAQNNRGKGSGKRPASVDRPGRH.

The protein belongs to the TRAFAC class YlqF/YawG GTPase family. RsgA subfamily. In terms of assembly, monomer. Associates with 30S ribosomal subunit, binds 16S rRNA. The cofactor is Zn(2+).

Its subcellular location is the cytoplasm. Functionally, one of several proteins that assist in the late maturation steps of the functional core of the 30S ribosomal subunit. Helps release RbfA from mature subunits. May play a role in the assembly of ribosomal proteins into the subunit. Circularly permuted GTPase that catalyzes slow GTP hydrolysis, GTPase activity is stimulated by the 30S ribosomal subunit. The sequence is that of Small ribosomal subunit biogenesis GTPase RsgA from Xanthomonas axonopodis pv. citri (strain 306).